The sequence spans 85 residues: Toxin BmKa1 (85 aa).

The first 19 residues, 1 to 19, serve as a signal peptide directing secretion; that stretch reads MNYLVFFSLALLLMTGVGS. Positions 21-83 constitute an LCN-type CS-alpha/beta domain; that stretch reads RDGYIADDKN…VPIRVPGKCN (63 aa). Disulfide bonds link cysteine 31-cysteine 82, cysteine 35-cysteine 55, cysteine 41-cysteine 65, and cysteine 45-cysteine 67.

This sequence belongs to the long (4 C-C) scorpion toxin superfamily. Sodium channel inhibitor family. Alpha subfamily. In terms of tissue distribution, expressed by the venom gland.

The protein resides in the secreted. Functionally, alpha toxins bind voltage-independently at site-3 of sodium channels (Nav) and inhibit the inactivation of the activated channels, thereby blocking neuronal transmission. The sequence is that of Toxin BmKa1 from Olivierus martensii (Manchurian scorpion).